A 160-amino-acid chain; its full sequence is Ribosomal RNA large subunit methyltransferase H (160 aa).

S-adenosyl-L-methionine contacts are provided by residues Leu-76, Gly-108, and 127 to 132; that span reads LGELTW.

Belongs to the RNA methyltransferase RlmH family. In terms of assembly, homodimer.

It is found in the cytoplasm. It carries out the reaction pseudouridine(1915) in 23S rRNA + S-adenosyl-L-methionine = N(3)-methylpseudouridine(1915) in 23S rRNA + S-adenosyl-L-homocysteine + H(+). Functionally, specifically methylates the pseudouridine at position 1915 (m3Psi1915) in 23S rRNA. This Brucella anthropi (strain ATCC 49188 / DSM 6882 / CCUG 24695 / JCM 21032 / LMG 3331 / NBRC 15819 / NCTC 12168 / Alc 37) (Ochrobactrum anthropi) protein is Ribosomal RNA large subunit methyltransferase H.